Here is a 949-residue protein sequence, read N- to C-terminus: Pyruvate, phosphate dikinase, chloroplastic (949 aa).

The transit peptide at 1 to 74 (MASAFKGILI…VMAPASDPTS (74 aa)) directs the protein to the chloroplast. Position 530 is a phosphothreonine; by PDRP1 (T530). Residue H532 is the Tele-phosphohistidine intermediate of the active site. The substrate site is built by R638, R695, E824, G845, T846, N847, and D848. E824 contacts Mg(2+). Mg(2+) is bound at residue D848. C910 (proton donor) is an active-site residue.

It belongs to the PEP-utilizing enzyme family. As to quaternary structure, homodimer. Mg(2+) is required as a cofactor. Post-translationally, phosphorylation of Thr-530 in the dark inactivates the enzyme. Dephosphorylation upon light stimulation reactivates the enzyme.

It is found in the plastid. Its subcellular location is the chloroplast. The catalysed reaction is pyruvate + phosphate + ATP = phosphoenolpyruvate + AMP + diphosphate + H(+). With respect to regulation, activated by light-induced dephosphorylation. Inhibited by dark-induced phosphorylation. Both reactions are catalyzed by PDRP1. Its function is as follows. Formation of phosphoenolpyruvate, which is the primary acceptor of CO(2) in C4 and some Crassulacean acid metabolism plants. The chain is Pyruvate, phosphate dikinase, chloroplastic (PPD) from Mesembryanthemum crystallinum (Common ice plant).